Consider the following 564-residue polypeptide: ATP-dependent RNA helicase ROK1 (564 aa).

Disordered regions lie at residues 1–25 (MDIF…KAAD) and 62–87 (EDDR…DGLI). 2 stretches are compositionally biased toward basic and acidic residues: residues 13-23 (VKKESGPKAKA) and 62-86 (EDDR…DDGL). Positions 122-150 (DLISRFSFDRRLLNNLIENGFTEPTPIQC) match the Q motif motif. The Helicase ATP-binding domain occupies 153–333 (IPVALNNRDV…QSIMMDPVRV (181 aa)). ATP is bound at residue 166–173 (GPTGSGKT). The DEAD box signature appears at 280-283 (DEAD). In terms of domain architecture, Helicase C-terminal spans 344–506 (NIEQKLIFCG…EVSEWMDKMA (163 aa)). Residues 512 to 564 (EKESIKNGKAHKERKQITTVPKMDKAKRRRQQEMIAASKRRKNEELSKKHFSK) are disordered. The span at 553–564 (KNEELSKKHFSK) shows a compositional bias: basic and acidic residues.

The protein belongs to the DEAD box helicase family. DDX52/ROK1 subfamily. Interacts with the U3 snoRNA and is associated with the 90S and 40S pre-ribosomes. This association requires the presence of RRP5. Also interacts with OSH3.

It is found in the nucleus. Its subcellular location is the nucleolus. It carries out the reaction ATP + H2O = ADP + phosphate + H(+). Functionally, ATP-dependent RNA helicase involved in 40S ribosomal subunit biogenesis. Required for the processing and cleavage of 35S pre-rRNA at sites A0, A1, and A2, leading to mature 18S rRNA. The sequence is that of ATP-dependent RNA helicase ROK1 (ROK1) from Saccharomyces cerevisiae (strain YJM789) (Baker's yeast).